We begin with the raw amino-acid sequence, 93 residues long: Progonadoliberin-2 (93 aa).

Positions 1-24 (MACQRHLLFLLLVLFAVSTQLSHG) are cleaved as a signal peptide. Position 25 is a pyrrolidone carboxylic acid (glutamine 25). Glycine 34 carries the post-translational modification Glycine amide.

Belongs to the GnRH family. As to expression, midbrain and hindbrain.

It localises to the secreted. Stimulates the secretion of gonadotropins. This Aquarana catesbeiana (American bullfrog) protein is Progonadoliberin-2 (gnrh2).